Here is a 492-residue protein sequence, read N- to C-terminus: N-succinylglutamate 5-semialdehyde dehydrogenase (492 aa).

220–225 (GSASTG) lines the NAD(+) pocket. Catalysis depends on residues glutamate 243 and cysteine 277.

Belongs to the aldehyde dehydrogenase family. AstD subfamily.

It carries out the reaction N-succinyl-L-glutamate 5-semialdehyde + NAD(+) + H2O = N-succinyl-L-glutamate + NADH + 2 H(+). It functions in the pathway amino-acid degradation; L-arginine degradation via AST pathway; L-glutamate and succinate from L-arginine: step 4/5. Its function is as follows. Catalyzes the NAD-dependent reduction of succinylglutamate semialdehyde into succinylglutamate. The chain is N-succinylglutamate 5-semialdehyde dehydrogenase from Salmonella agona (strain SL483).